Consider the following 665-residue polypeptide: Fermitin family homolog 3 (665 aa).

At Tyr11 the chain carries Phosphotyrosine. The FERM domain maps to Trp229–Val556. Residues Asp354–Lys453 form the PH domain. Tyr502 bears the Phosphotyrosine mark. Thr589 bears the Phosphothreonine mark.

The protein belongs to the kindlin family. Interacts with ITGB1, ITGB2 and ITGB3 (via cytoplasmic tails).

The protein resides in the cell projection. The protein localises to the podosome. Plays a central role in cell adhesion in hematopoietic cells. Acts by activating the integrin beta-1-3 (ITGB1, ITGB2 and ITGB3). Required for integrin-mediated platelet adhesion and leukocyte adhesion to endothelial cells. Required for activation of integrin beta-2 (ITGB2) in polymorphonuclear granulocytes (PMNs). This is Fermitin family homolog 3 (FERMT3) from Bos taurus (Bovine).